The following is a 322-amino-acid chain: UDP-galactose transporter homolog 1 (322 aa).

5 consecutive transmembrane segments (helical) span residues Phe4–Val24, Ala43–Phe63, Phe76–Ala96, Thr105–Tyr125, and Phe129–Tyr149. The N-linked (GlcNAc...) asparagine glycan is linked to Asn152. 4 helical membrane passes run Ser164–Thr184, Met199–Phe219, Leu250–Thr270, and Ile290–Ile310. 2 N-linked (GlcNAc...) asparagine glycosylation sites follow: Asn313 and Asn314.

Belongs to the nucleotide-sugar transporter family. SLC35B subfamily.

The protein resides in the endoplasmic reticulum membrane. Its function is as follows. May be involved in specific transport of UDP-Gal from the cytosol to the Golgi lumen. Involved in the maintenance of optimal conditions for the folding of secretory pathway proteins in the endoplasmic reticulum. The chain is UDP-galactose transporter homolog 1 (hut1) from Schizosaccharomyces pombe (strain 972 / ATCC 24843) (Fission yeast).